A 41-amino-acid chain; its full sequence is uncharacterized protein (41 aa).

This is an uncharacterized protein from Archaeoglobus fulgidus (strain ATCC 49558 / DSM 4304 / JCM 9628 / NBRC 100126 / VC-16).